Consider the following 503-residue polypeptide: Probable cytosol aminopeptidase (503 aa).

Mn(2+)-binding residues include lysine 268 and aspartate 273. Residue lysine 280 is part of the active site. Mn(2+) contacts are provided by aspartate 291, aspartate 350, and glutamate 352. Arginine 354 is an active-site residue.

This sequence belongs to the peptidase M17 family. Mn(2+) serves as cofactor.

It localises to the cytoplasm. The catalysed reaction is Release of an N-terminal amino acid, Xaa-|-Yaa-, in which Xaa is preferably Leu, but may be other amino acids including Pro although not Arg or Lys, and Yaa may be Pro. Amino acid amides and methyl esters are also readily hydrolyzed, but rates on arylamides are exceedingly low.. It catalyses the reaction Release of an N-terminal amino acid, preferentially leucine, but not glutamic or aspartic acids.. Presumably involved in the processing and regular turnover of intracellular proteins. Catalyzes the removal of unsubstituted N-terminal amino acids from various peptides. This chain is Probable cytosol aminopeptidase, found in Herminiimonas arsenicoxydans.